The chain runs to 565 residues: Receptor-like serine/threonine-protein kinase NCRK (565 aa).

The signal sequence occupies residues M1–G23. Over G24–L103 the chain is Extracellular. N-linked (GlcNAc...) asparagine glycosylation is found at N27, N37, N45, N77, and N85. A helical transmembrane segment spans residues V104–I124. Residues C125–I565 are Cytoplasmic-facing. Residues F210–I495 form the Protein kinase domain. ATP contacts are provided by residues I216 to V224 and K238. Catalysis depends on D339, which acts as the Proton acceptor. A phosphothreonine mark is found at T378 and T383. The residue at position 391 (Y391) is a Phosphotyrosine.

This sequence belongs to the protein kinase superfamily. Ser/Thr protein kinase family. As to quaternary structure, interacts with ARAC5. In terms of processing, phosphorylated. As to expression, mostly expressed in leaf primordia, root and shoot apical meristems, lateral root primordia, and stele of older roots and hypocotyls. In leaves and cotyledons, highest levels observed in trichomes, vasculatures, and hydathode endothem.

It is found in the cell membrane. The protein localises to the prevacuolar compartment membrane. The protein resides in the endosome. It catalyses the reaction L-seryl-[protein] + ATP = O-phospho-L-seryl-[protein] + ADP + H(+). The catalysed reaction is L-threonyl-[protein] + ATP = O-phospho-L-threonyl-[protein] + ADP + H(+). This is Receptor-like serine/threonine-protein kinase NCRK (NCRK) from Arabidopsis thaliana (Mouse-ear cress).